The chain runs to 458 residues: ATP synthase subunit beta (458 aa).

ATP is bound at residue 148–155; sequence GGAGVGKT.

This sequence belongs to the ATPase alpha/beta chains family. F-type ATPases have 2 components, CF(1) - the catalytic core - and CF(0) - the membrane proton channel. CF(1) has five subunits: alpha(3), beta(3), gamma(1), delta(1), epsilon(1). CF(0) has three main subunits: a(1), b(2) and c(9-12). The alpha and beta chains form an alternating ring which encloses part of the gamma chain. CF(1) is attached to CF(0) by a central stalk formed by the gamma and epsilon chains, while a peripheral stalk is formed by the delta and b chains.

It localises to the cell inner membrane. It carries out the reaction ATP + H2O + 4 H(+)(in) = ADP + phosphate + 5 H(+)(out). Produces ATP from ADP in the presence of a proton gradient across the membrane. The catalytic sites are hosted primarily by the beta subunits. The sequence is that of ATP synthase subunit beta from Shewanella loihica (strain ATCC BAA-1088 / PV-4).